The primary structure comprises 351 residues: Nicotinate-nucleotide--dimethylbenzimidazole phosphoribosyltransferase (351 aa).

Glutamate 317 acts as the Proton acceptor in catalysis.

It belongs to the CobT family.

It catalyses the reaction 5,6-dimethylbenzimidazole + nicotinate beta-D-ribonucleotide = alpha-ribazole 5'-phosphate + nicotinate + H(+). Its pathway is nucleoside biosynthesis; alpha-ribazole biosynthesis; alpha-ribazole from 5,6-dimethylbenzimidazole: step 1/2. Catalyzes the synthesis of alpha-ribazole-5'-phosphate from nicotinate mononucleotide (NAMN) and 5,6-dimethylbenzimidazole (DMB). The polypeptide is Nicotinate-nucleotide--dimethylbenzimidazole phosphoribosyltransferase (Pseudomonas putida (strain W619)).